The sequence spans 521 residues: Glutamyl-tRNA(Gln) amidotransferase subunit A (521 aa).

Residues lysine 79 and serine 187 each act as charge relay system in the active site. The active-site Acyl-ester intermediate is the serine 211.

Belongs to the amidase family. GatA subfamily. As to quaternary structure, heterotrimer of A, B and C subunits.

The catalysed reaction is L-glutamyl-tRNA(Gln) + L-glutamine + ATP + H2O = L-glutaminyl-tRNA(Gln) + L-glutamate + ADP + phosphate + H(+). Allows the formation of correctly charged Gln-tRNA(Gln) through the transamidation of misacylated Glu-tRNA(Gln) in organisms which lack glutaminyl-tRNA synthetase. The reaction takes place in the presence of glutamine and ATP through an activated gamma-phospho-Glu-tRNA(Gln). This chain is Glutamyl-tRNA(Gln) amidotransferase subunit A, found in Mesorhizobium japonicum (strain LMG 29417 / CECT 9101 / MAFF 303099) (Mesorhizobium loti (strain MAFF 303099)).